The chain runs to 230 residues: Large ribosomal subunit protein uL1 (230 aa).

This sequence belongs to the universal ribosomal protein uL1 family. As to quaternary structure, part of the 50S ribosomal subunit.

In terms of biological role, binds directly to 23S rRNA. The L1 stalk is quite mobile in the ribosome, and is involved in E site tRNA release. Its function is as follows. Protein L1 is also a translational repressor protein, it controls the translation of the L11 operon by binding to its mRNA. In Leptospira borgpetersenii serovar Hardjo-bovis (strain L550), this protein is Large ribosomal subunit protein uL1.